A 339-amino-acid polypeptide reads, in one-letter code: Dihydroorotate dehydrogenase (quinone) (339 aa).

Residues 62–66 (AGMDK) and T86 each bind FMN. K66 is a binding site for substrate. 111 to 115 (NRMGF) contributes to the substrate binding site. Residues N139 and N172 each coordinate FMN. Position 172 (N172) interacts with substrate. The Nucleophile role is filled by S175. Residue N177 participates in substrate binding. The FMN site is built by K217 and T245. Position 246 to 247 (246 to 247 (NT)) interacts with substrate. Residues G268, G297, and 318–319 (YS) contribute to the FMN site.

It belongs to the dihydroorotate dehydrogenase family. Type 2 subfamily. As to quaternary structure, monomer. It depends on FMN as a cofactor.

The protein localises to the cell membrane. The enzyme catalyses (S)-dihydroorotate + a quinone = orotate + a quinol. It functions in the pathway pyrimidine metabolism; UMP biosynthesis via de novo pathway; orotate from (S)-dihydroorotate (quinone route): step 1/1. Functionally, catalyzes the conversion of dihydroorotate to orotate with quinone as electron acceptor. This Shewanella pealeana (strain ATCC 700345 / ANG-SQ1) protein is Dihydroorotate dehydrogenase (quinone).